Reading from the N-terminus, the 438-residue chain is 3-phosphoshikimate 1-carboxyvinyltransferase (438 aa).

Residues K26, S27, and R31 each contribute to the 3-phosphoshikimate site. K26 is a phosphoenolpyruvate binding site. G99 and R127 together coordinate phosphoenolpyruvate. Positions 172, 174, 320, and 347 each coordinate 3-phosphoshikimate. Q174 is a phosphoenolpyruvate binding site. D320 serves as the catalytic Proton acceptor. Positions 351 and 392 each coordinate phosphoenolpyruvate.

This sequence belongs to the EPSP synthase family. As to quaternary structure, monomer.

It is found in the cytoplasm. The catalysed reaction is 3-phosphoshikimate + phosphoenolpyruvate = 5-O-(1-carboxyvinyl)-3-phosphoshikimate + phosphate. It participates in metabolic intermediate biosynthesis; chorismate biosynthesis; chorismate from D-erythrose 4-phosphate and phosphoenolpyruvate: step 6/7. Its function is as follows. Catalyzes the transfer of the enolpyruvyl moiety of phosphoenolpyruvate (PEP) to the 5-hydroxyl of shikimate-3-phosphate (S3P) to produce enolpyruvyl shikimate-3-phosphate and inorganic phosphate. This is 3-phosphoshikimate 1-carboxyvinyltransferase from Xanthomonas campestris pv. campestris (strain 8004).